We begin with the raw amino-acid sequence, 123 residues long: Small ribosomal subunit protein uS13c (123 aa).

Positions 89–123 (RGKRHRNNLPVRGQRTRTNARSRRGSKKTVTGKKK) are disordered. Residues 102–123 (QRTRTNARSRRGSKKTVTGKKK) are compositionally biased toward basic residues.

This sequence belongs to the universal ribosomal protein uS13 family. As to quaternary structure, part of the 30S ribosomal subunit.

It is found in the plastid. The protein localises to the chloroplast. Functionally, located at the top of the head of the 30S subunit, it contacts several helices of the 16S rRNA. This Phaeodactylum tricornutum (strain CCAP 1055/1) protein is Small ribosomal subunit protein uS13c.